The primary structure comprises 270 residues: Putative pyruvate, phosphate dikinase regulatory protein (270 aa).

An ADP-binding site is contributed by 147–154; that stretch reads GVSRSSKT.

Belongs to the pyruvate, phosphate/water dikinase regulatory protein family. PDRP subfamily.

It catalyses the reaction N(tele)-phospho-L-histidyl/L-threonyl-[pyruvate, phosphate dikinase] + ADP = N(tele)-phospho-L-histidyl/O-phospho-L-threonyl-[pyruvate, phosphate dikinase] + AMP + H(+). The enzyme catalyses N(tele)-phospho-L-histidyl/O-phospho-L-threonyl-[pyruvate, phosphate dikinase] + phosphate + H(+) = N(tele)-phospho-L-histidyl/L-threonyl-[pyruvate, phosphate dikinase] + diphosphate. In terms of biological role, bifunctional serine/threonine kinase and phosphorylase involved in the regulation of the pyruvate, phosphate dikinase (PPDK) by catalyzing its phosphorylation/dephosphorylation. The polypeptide is Putative pyruvate, phosphate dikinase regulatory protein (Citrifermentans bemidjiense (strain ATCC BAA-1014 / DSM 16622 / JCM 12645 / Bem) (Geobacter bemidjiensis)).